Reading from the N-terminus, the 323-residue chain is Probable pectate lyase A (323 aa).

An N-terminal signal peptide occupies residues 1–20 (MTNFKWIVAAAGLLSGQVLA). N95 is a glycosylation site (N-linked (GlcNAc...) asparagine). Ca(2+)-binding residues include D136, D165, and D169. The active site involves R222.

This sequence belongs to the polysaccharide lyase 1 family. The cofactor is Ca(2+).

The protein localises to the secreted. It carries out the reaction Eliminative cleavage of (1-&gt;4)-alpha-D-galacturonan to give oligosaccharides with 4-deoxy-alpha-D-galact-4-enuronosyl groups at their non-reducing ends.. Pectinolytic enzyme consist of four classes of enzymes: pectin lyase, polygalacturonase, pectin methylesterase and rhamnogalacturonase. Among pectinolytic enzymes, pectin lyase is the most important in depolymerization of pectin, since it cleaves internal glycosidic bonds of highly methylated pectins. Favors pectate, the anion, over pectin, the methyl ester. The sequence is that of Probable pectate lyase A (plyA) from Aspergillus niger (strain ATCC MYA-4892 / CBS 513.88 / FGSC A1513).